A 121-amino-acid polypeptide reads, in one-letter code: Large ribosomal subunit protein uL18 (121 aa).

It belongs to the universal ribosomal protein uL18 family. In terms of assembly, part of the 50S ribosomal subunit; part of the 5S rRNA/L5/L18/L25 subcomplex. Contacts the 5S and 23S rRNAs.

Its function is as follows. This is one of the proteins that bind and probably mediate the attachment of the 5S RNA into the large ribosomal subunit, where it forms part of the central protuberance. This is Large ribosomal subunit protein uL18 from Caldanaerobacter subterraneus subsp. tengcongensis (strain DSM 15242 / JCM 11007 / NBRC 100824 / MB4) (Thermoanaerobacter tengcongensis).